The primary structure comprises 256 residues: (R)-S-adenosyl-L-methionine hydrolase (256 aa).

The adenosine site is built by D7, H41, D68, and N183. (R)-S-adenosyl-L-methionine-binding residues include N183, Y212, S226, E231, V234, and M236. V234 is an adenosine binding site.

Belongs to the SAM hydrolase / SAM-dependent halogenase family. In terms of assembly, homotrimer.

It carries out the reaction (R)-S-adenosyl-L-methionine + H2O = adenosine + L-methionine + H(+). In terms of biological role, catalyzes the hydrolysis of S-adenosyl-L-methionine (SAM) into adenosine and L-methionine. Is likely stereoselective, specifically hydrolyzing (R)-S-adenosyl-L-methionine ((R)-SAM), the inactive form of the ubiquitous cofactor SAM, and not the active form of SAM, (S)-S-adenosyl-L-methionine. Probaly plays a role in preventing accumulation of (R)-S-adenosyl-L-methionine in cells; maintenance of (S)-S-denosyl-L-methionine homochirality is important for cellular health given that the (R)-form is largely inactive as a methyl donor and can function as an inhibitor of methyltransferases. Is unable to mediate a fluorination or chlorination reaction with SAM. In Pyrococcus horikoshii (strain ATCC 700860 / DSM 12428 / JCM 9974 / NBRC 100139 / OT-3), this protein is (R)-S-adenosyl-L-methionine hydrolase.